Here is a 262-residue protein sequence, read N- to C-terminus: pFDCC methylesterase MES16 (262 aa).

Serine 87 acts as the Acyl-ester intermediate in catalysis. Residues aspartate 211 and histidine 239 each act as charge relay system in the active site.

The protein belongs to the AB hydrolase superfamily. Methylesterase family.

The protein resides in the cytoplasm. It catalyses the reaction methyl (indol-3-yl)acetate + H2O = (indol-3-yl)acetate + methanol + H(+). The catalysed reaction is methyl (-)-jasmonate + H2O = jasmonate + methanol + H(+). It carries out the reaction primary fluorescent dioxobilin-type chlorophyll catabolite + H2O = O13(4)-desmethyl pFDCC + methanol + H(+). It participates in plant hormone biosynthesis. The protein operates within lipid metabolism; oxylipin biosynthesis. It functions in the pathway porphyrin-containing compound metabolism; chlorophyll degradation. In terms of biological role, involved in the chlorophyll breakdown by its action in fluorescent chlorophyll catabolites (FCCs) demethylation. Demethylates the C13(2)-carboxymethyl group present at the isocyclic ring of chlorophyll. Uses primary fluorescent dioxobilin-type chlorophyll catabolite (pFDCC) as substrate to produce O13(4)-desmethyl pFDCC. Also able to catalyze pheophorbides in vitro. Methylesterase shown to have carboxylesterase activity, methyl indole-3-acetic acid (MeIAA) esterase activity and methyl jasmonate (MeJA) esterase activity in vitro. The protein is pFDCC methylesterase MES16 of Arabidopsis thaliana (Mouse-ear cress).